Consider the following 245-residue polypeptide: Tryptophan synthase alpha chain (245 aa).

Active-site proton acceptor residues include E37 and D48.

Belongs to the TrpA family. As to quaternary structure, tetramer of two alpha and two beta chains.

It catalyses the reaction (1S,2R)-1-C-(indol-3-yl)glycerol 3-phosphate + L-serine = D-glyceraldehyde 3-phosphate + L-tryptophan + H2O. The protein operates within amino-acid biosynthesis; L-tryptophan biosynthesis; L-tryptophan from chorismate: step 5/5. Functionally, the alpha subunit is responsible for the aldol cleavage of indoleglycerol phosphate to indole and glyceraldehyde 3-phosphate. The sequence is that of Tryptophan synthase alpha chain from Saccharolobus solfataricus (strain ATCC 35092 / DSM 1617 / JCM 11322 / P2) (Sulfolobus solfataricus).